We begin with the raw amino-acid sequence, 74 residues long: ATP synthase subunit c (74 aa).

2 helical membrane-spanning segments follow: residues 5–25 (LAYIGAGLAGMGTGIAALGVG) and 49–69 (LFIGIAFAEALGIFSFLVALL).

It belongs to the ATPase C chain family. F-type ATPases have 2 components, F(1) - the catalytic core - and F(0) - the membrane proton channel. F(1) has five subunits: alpha(3), beta(3), gamma(1), delta(1), epsilon(1). F(0) has three main subunits: a(1), b(2) and c(10-14). The alpha and beta chains form an alternating ring which encloses part of the gamma chain. F(1) is attached to F(0) by a central stalk formed by the gamma and epsilon chains, while a peripheral stalk is formed by the delta and b chains.

The protein resides in the cell inner membrane. Functionally, f(1)F(0) ATP synthase produces ATP from ADP in the presence of a proton or sodium gradient. F-type ATPases consist of two structural domains, F(1) containing the extramembraneous catalytic core and F(0) containing the membrane proton channel, linked together by a central stalk and a peripheral stalk. During catalysis, ATP synthesis in the catalytic domain of F(1) is coupled via a rotary mechanism of the central stalk subunits to proton translocation. Key component of the F(0) channel; it plays a direct role in translocation across the membrane. A homomeric c-ring of between 10-14 subunits forms the central stalk rotor element with the F(1) delta and epsilon subunits. The chain is ATP synthase subunit c from Ruegeria sp. (strain TM1040) (Silicibacter sp.).